The following is a 529-amino-acid chain: Bifunctional purine biosynthesis protein PurH (529 aa).

Positions 1 to 148 constitute an MGS-like domain; that stretch reads MQQRRPVRRA…KNHKDVAIVV (148 aa).

This sequence belongs to the PurH family.

It catalyses the reaction (6R)-10-formyltetrahydrofolate + 5-amino-1-(5-phospho-beta-D-ribosyl)imidazole-4-carboxamide = 5-formamido-1-(5-phospho-D-ribosyl)imidazole-4-carboxamide + (6S)-5,6,7,8-tetrahydrofolate. The enzyme catalyses IMP + H2O = 5-formamido-1-(5-phospho-D-ribosyl)imidazole-4-carboxamide. It participates in purine metabolism; IMP biosynthesis via de novo pathway; 5-formamido-1-(5-phospho-D-ribosyl)imidazole-4-carboxamide from 5-amino-1-(5-phospho-D-ribosyl)imidazole-4-carboxamide (10-formyl THF route): step 1/1. The protein operates within purine metabolism; IMP biosynthesis via de novo pathway; IMP from 5-formamido-1-(5-phospho-D-ribosyl)imidazole-4-carboxamide: step 1/1. The protein is Bifunctional purine biosynthesis protein PurH of Salmonella enteritidis PT4 (strain P125109).